The chain runs to 638 residues: DNA gyrase subunit B (638 aa).

The Toprim domain occupies 431 to 545 (RELFIVEGNS…YGFVYIAQPP (115 aa)). Mg(2+)-binding residues include glutamate 437, aspartate 510, and aspartate 512.

This sequence belongs to the type II topoisomerase GyrB family. In terms of assembly, heterotetramer, composed of two GyrA and two GyrB chains. In the heterotetramer, GyrA contains the active site tyrosine that forms a transient covalent intermediate with DNA, while GyrB binds cofactors and catalyzes ATP hydrolysis. The cofactor is Mg(2+). Mn(2+) is required as a cofactor. Ca(2+) serves as cofactor.

The protein localises to the cytoplasm. It carries out the reaction ATP-dependent breakage, passage and rejoining of double-stranded DNA.. In terms of biological role, a type II topoisomerase that negatively supercoils closed circular double-stranded (ds) DNA in an ATP-dependent manner to modulate DNA topology and maintain chromosomes in an underwound state. Negative supercoiling favors strand separation, and DNA replication, transcription, recombination and repair, all of which involve strand separation. Also able to catalyze the interconversion of other topological isomers of dsDNA rings, including catenanes and knotted rings. Type II topoisomerases break and join 2 DNA strands simultaneously in an ATP-dependent manner. The polypeptide is DNA gyrase subunit B (Metamycoplasma arthritidis (Mycoplasma arthritidis)).